We begin with the raw amino-acid sequence, 173 residues long: Putative phosphoesterase GTNG_0743 (173 aa).

Residue His34 is the Proton donor of the active site. 2 short sequence motifs (HXTX) span residues 34–37 and 115–118; these read HITL and HITI. His115 acts as the Proton acceptor in catalysis.

It belongs to the 2H phosphoesterase superfamily. YjcG family.

In Geobacillus thermodenitrificans (strain NG80-2), this protein is Putative phosphoesterase GTNG_0743.